The sequence spans 518 residues: Sensor protein kinase HptS (518 aa).

2 helical membrane-spanning segments follow: residues 20–40 and 222–242; these read IFPV…IYIW and GITL…FGFI. A Histidine kinase domain is found at 297-513; sequence EQLIHSIEHT…LICYKIPLSR (217 aa). Phosphohistidine; by autocatalysis is present on histidine 325.

In terms of processing, autophosphorylated.

The protein localises to the cell membrane. The catalysed reaction is ATP + protein L-histidine = ADP + protein N-phospho-L-histidine.. Its function is as follows. Member of the two-component regulatory system HptS/HptR that regulates genes involved in hexose phosphate transport system in response to changes in extracellular phosphate sources. May act as a sensor protein kinase which is autophosphorylated at a histidine residue and transfers its phosphate group to the conserved aspartic acid residue in the regulatory domain of HptS. In turn, HptS antagonizes CcpA-dependent transcription of a subset of CcpA-regulated genes involved in antibiotic susceptibility. The chain is Sensor protein kinase HptS (hptS) from Staphylococcus aureus (strain USA300).